We begin with the raw amino-acid sequence, 346 residues long: Tetraacyldisaccharide 4'-kinase (346 aa).

Residue 53–60 (TCGGTGKT) participates in ATP binding.

Belongs to the LpxK family.

The enzyme catalyses a lipid A disaccharide + ATP = a lipid IVA + ADP + H(+). It functions in the pathway glycolipid biosynthesis; lipid IV(A) biosynthesis; lipid IV(A) from (3R)-3-hydroxytetradecanoyl-[acyl-carrier-protein] and UDP-N-acetyl-alpha-D-glucosamine: step 6/6. In terms of biological role, transfers the gamma-phosphate of ATP to the 4'-position of a tetraacyldisaccharide 1-phosphate intermediate (termed DS-1-P) to form tetraacyldisaccharide 1,4'-bis-phosphate (lipid IVA). In Bartonella tribocorum (strain CIP 105476 / IBS 506), this protein is Tetraacyldisaccharide 4'-kinase.